A 545-amino-acid chain; its full sequence is 1,3-beta-glucanosyltransferase ARB_07487 (545 aa).

The N-terminal stretch at 1–19 (MKFSSLAAATALVAGSVVA) is a signal peptide. N-linked (GlcNAc...) asparagine glycosylation is found at N51 and N69. An intrachain disulfide couples C88 to C117. (1,3-beta-D-glucosyl)n is bound by residues Y106, 133–141 (SEPSTSIIR), N174, and E175. E175 functions as the Proton donor in the catalytic mechanism. N179 carries N-linked (GlcNAc...) asparagine glycosylation. D216 and R221 together coordinate (1,3-beta-D-glucosyl)n. 5 disulfide bridges follow: C230-C363, C248-C279, C384-C437, C393-C464, and C412-C419. Catalysis depends on E276, which acts as the Nucleophile. Residue Y308 participates in (1,3-beta-D-glucosyl)n binding. The segment at 493-513 (GTGSVTSAPGSGGNKPDQGAA) is disordered. A512 carries the GPI-anchor amidated alanine lipid modification. The propeptide at 513-545 (ASTISAPSVNLGIVKLGAYIFCAVLAGAGMILI) is removed in mature form.

Belongs to the glycosyl hydrolase 72 family. In terms of processing, the GPI-anchor is attached to the protein in the endoplasmic reticulum and serves to target the protein to the cell surface. There, the glucosamine-inositol phospholipid moiety is cleaved off and the GPI-modified mannoprotein is covalently attached via its lipidless GPI glycan remnant to the 1,6-beta-glucan of the outer cell wall layer.

It is found in the secreted. It localises to the cell membrane. Its subcellular location is the cell wall. Its function is as follows. Splits internally a 1,3-beta-glucan molecule and transfers the newly generated reducing end (the donor) to the non-reducing end of another 1,3-beta-glucan molecule (the acceptor) forming a 1,3-beta linkage, resulting in the elongation of 1,3-beta-glucan chains in the cell wall. Involved in cell wall biosynthesis and morphogenesis. The polypeptide is 1,3-beta-glucanosyltransferase ARB_07487 (Arthroderma benhamiae (strain ATCC MYA-4681 / CBS 112371) (Trichophyton mentagrophytes)).